Reading from the N-terminus, the 102-residue chain is MAKEKIRIRLKAYDHRILDQSAEKIVDTAKRSGAKVSGPIPLPTEKSVYTVLRAVHKYKDSREQFEMRTHKRLIDILEPTPKTVDALMRLDLPSGVDIEIKL.

Belongs to the universal ribosomal protein uS10 family. Part of the 30S ribosomal subunit.

Functionally, involved in the binding of tRNA to the ribosomes. This chain is Small ribosomal subunit protein uS10, found in Oceanobacillus iheyensis (strain DSM 14371 / CIP 107618 / JCM 11309 / KCTC 3954 / HTE831).